Consider the following 327-residue polypeptide: Biotin synthase (327 aa).

The 228-residue stretch at 52 to 279 folds into the Radical SAM core domain; the sequence is NAIQRSTLLS…TSWVRLSAGR (228 aa). Positions 67, 71, and 74 each coordinate [4Fe-4S] cluster. Cysteine 111, cysteine 142, cysteine 202, and arginine 274 together coordinate [2Fe-2S] cluster.

This sequence belongs to the radical SAM superfamily. Biotin synthase family. As to quaternary structure, homodimer. [4Fe-4S] cluster is required as a cofactor. Requires [2Fe-2S] cluster as cofactor.

It catalyses the reaction (4R,5S)-dethiobiotin + (sulfur carrier)-SH + 2 reduced [2Fe-2S]-[ferredoxin] + 2 S-adenosyl-L-methionine = (sulfur carrier)-H + biotin + 2 5'-deoxyadenosine + 2 L-methionine + 2 oxidized [2Fe-2S]-[ferredoxin]. It functions in the pathway cofactor biosynthesis; biotin biosynthesis; biotin from 7,8-diaminononanoate: step 2/2. Catalyzes the conversion of dethiobiotin (DTB) to biotin by the insertion of a sulfur atom into dethiobiotin via a radical-based mechanism. The sequence is that of Biotin synthase from Dechloromonas aromatica (strain RCB).